Here is a 991-residue protein sequence, read N- to C-terminus: Glutamate receptor 1 (991 aa).

Positions 1–27 (MHSRLKFLAYLHFICASSIFWPEFSSA) are cleaved as a signal peptide. Residues 28-611 (QQQQQTVSLT…VFSFLNPLSQ (584 aa)) lie on the Extracellular side of the membrane. Residues asparagine 67, asparagine 195, asparagine 208, and asparagine 281 are each glycosylated (N-linked (GlcNAc...) asparagine). Disordered stretches follow at residues 300 to 321 (DSRK…GPNS) and 354 to 379 (FRSN…NESS). Polar residues predominate over residues 308 to 318 (SGQSQSQNAGG). Residues 365 to 379 (GGSSSSSATGTNESS) are compositionally biased toward low complexity. 5 N-linked (GlcNAc...) asparagine glycosylation sites follow: asparagine 376, asparagine 385, asparagine 426, asparagine 437, and asparagine 477. Residues 612-632 (EIWISVILSYVGVSFVLYFVT) form a helical membrane-spanning segment. Residues 633–710 (RFPPYEWRIV…PSIAGRIAAA (78 aa)) are Cytoplasmic-facing. A helical membrane pass occupies residues 711 to 731 (VWWFFTIILISSYTANLAAFL). The Extracellular portion of the chain corresponds to 732–895 (TVERMVAPIK…STPNELSLSN (164 aa)). The chain crosses the membrane as a helical span at residues 896–916 (VAGIYYILIGGLLLAVIVAIM). Residues 917–991 (EFFCRNKTPQ…ASNVRYQYSM (75 aa)) are Cytoplasmic-facing.

This sequence belongs to the glutamate-gated ion channel (TC 1.A.10.1) family. As to quaternary structure, homooligomer. In terms of tissue distribution, central nervous system.

It is found in the cell membrane. The protein localises to the postsynaptic cell membrane. Receptor for glutamate. L-glutamate acts as an excitatory neurotransmitter at many synapses in the central nervous system. The postsynaptic actions of Glu are mediated by a variety of receptors that are named according to their selective agonists. Forms ligand-gated ion channels which are activated by kainate. The chain is Glutamate receptor 1 (GluRIA) from Drosophila melanogaster (Fruit fly).